We begin with the raw amino-acid sequence, 204 residues long: HTH-type transcriptional repressor KstR2 (204 aa).

The HTH tetR-type domain maps to 13–73 (SGRRTELLDI…EILRGFLDDL (61 aa)). The segment at residues 36-55 (TVRDIADAAGILSGSLYHHF) is a DNA-binding region (H-T-H motif).

As to quaternary structure, homodimer.

Controls the expression of a small regulon that may play a role in the utilization of cholesterol. In Rhodococcus jostii (strain RHA1), this protein is HTH-type transcriptional repressor KstR2 (kstR2).